The sequence spans 157 residues: S-ribosylhomocysteine lyase (157 aa).

The Fe cation site is built by histidine 54, histidine 58, and cysteine 126.

The protein belongs to the LuxS family. As to quaternary structure, homodimer. Fe cation serves as cofactor.

The enzyme catalyses S-(5-deoxy-D-ribos-5-yl)-L-homocysteine = (S)-4,5-dihydroxypentane-2,3-dione + L-homocysteine. In terms of biological role, involved in the synthesis of autoinducer 2 (AI-2) which is secreted by bacteria and is used to communicate both the cell density and the metabolic potential of the environment. The regulation of gene expression in response to changes in cell density is called quorum sensing. Catalyzes the transformation of S-ribosylhomocysteine (RHC) to homocysteine (HC) and 4,5-dihydroxy-2,3-pentadione (DPD). The polypeptide is S-ribosylhomocysteine lyase (Bacillus cytotoxicus (strain DSM 22905 / CIP 110041 / 391-98 / NVH 391-98)).